The following is a 98-amino-acid chain: Large ribosomal subunit protein bL25 (98 aa).

It belongs to the bacterial ribosomal protein bL25 family. Part of the 50S ribosomal subunit; part of the 5S rRNA/L5/L18/L25 subcomplex. Contacts the 5S rRNA. Binds to the 5S rRNA independently of L5 and L18.

This is one of the proteins that binds to the 5S RNA in the ribosome where it forms part of the central protuberance. This chain is Large ribosomal subunit protein bL25, found in Synechocystis sp. (strain ATCC 27184 / PCC 6803 / Kazusa).